Consider the following 228-residue polypeptide: Imidazole glycerol phosphate synthase subunit HisH (228 aa).

In terms of domain architecture, Glutamine amidotransferase type-1 spans 4-218 (DIAVVDYGMG…VTWNPGEHAS (215 aa)). Cys83 acts as the Nucleophile in catalysis. Active-site residues include His193 and Glu195.

Heterodimer of HisH and HisF.

It localises to the cytoplasm. The catalysed reaction is 5-[(5-phospho-1-deoxy-D-ribulos-1-ylimino)methylamino]-1-(5-phospho-beta-D-ribosyl)imidazole-4-carboxamide + L-glutamine = D-erythro-1-(imidazol-4-yl)glycerol 3-phosphate + 5-amino-1-(5-phospho-beta-D-ribosyl)imidazole-4-carboxamide + L-glutamate + H(+). It catalyses the reaction L-glutamine + H2O = L-glutamate + NH4(+). Its pathway is amino-acid biosynthesis; L-histidine biosynthesis; L-histidine from 5-phospho-alpha-D-ribose 1-diphosphate: step 5/9. IGPS catalyzes the conversion of PRFAR and glutamine to IGP, AICAR and glutamate. The HisH subunit catalyzes the hydrolysis of glutamine to glutamate and ammonia as part of the synthesis of IGP and AICAR. The resulting ammonia molecule is channeled to the active site of HisF. This Thiobacillus denitrificans (strain ATCC 25259 / T1) protein is Imidazole glycerol phosphate synthase subunit HisH.